The primary structure comprises 592 residues: Arginine--tRNA ligase (592 aa).

The 'HIGH' region motif lies at 123 to 133 (PNTNKPLHLGH).

It belongs to the class-I aminoacyl-tRNA synthetase family. As to quaternary structure, monomer.

Its subcellular location is the cytoplasm. The enzyme catalyses tRNA(Arg) + L-arginine + ATP = L-arginyl-tRNA(Arg) + AMP + diphosphate. The chain is Arginine--tRNA ligase from Flavobacterium johnsoniae (strain ATCC 17061 / DSM 2064 / JCM 8514 / BCRC 14874 / CCUG 350202 / NBRC 14942 / NCIMB 11054 / UW101) (Cytophaga johnsonae).